Consider the following 398-residue polypeptide: MKVLVINCGSSSLKYQLIDMTTEDALAEGLVERIGINGSILTQKVKGREKYIVEQPLKDHQDAIELVLKSLIDENHGVIKSMDEISAVGHRVVHGGEKYSKSVLVNDEVMKNIEACIKLAPLHNPPNIIGIKACEELMPNTPMVCVFDTAFHQTMPEKAYMYPLPYEYYTEDHIRKYGFHGTSHKYVANKVAEVMKKDASELKTVTCHLGNGVSITAVDGGKSIDTTMGFTPLAGTIMGSRCGDIDPAIVTYLIKEKGYSADEVNDILNKKSGILGVSGVGTDFRDIRSAMGENNKRAILATDIFGYQIKKQIGAYAAAMGGLDTIVFTAGIGEHAPEVRIRALTGLEFIGVELDEEKNNSHDIGEGLLISKESSKVKVYVIPTNEELMIAKETLALV.

Asn-7 is a Mg(2+) binding site. ATP is bound at residue Lys-14. Substrate is bound at residue Arg-91. The active-site Proton donor/acceptor is the Asp-148. ATP is bound by residues 208-212 (HLGNG), 283-285 (DFR), and 331-335 (GIGEH). A Mg(2+)-binding site is contributed by Glu-386.

Belongs to the acetokinase family. In terms of assembly, homodimer. Requires Mg(2+) as cofactor. Mn(2+) is required as a cofactor.

The protein resides in the cytoplasm. The catalysed reaction is acetate + ATP = acetyl phosphate + ADP. It participates in metabolic intermediate biosynthesis; acetyl-CoA biosynthesis; acetyl-CoA from acetate: step 1/2. Catalyzes the formation of acetyl phosphate from acetate and ATP. Can also catalyze the reverse reaction. This Clostridium botulinum (strain Alaska E43 / Type E3) protein is Acetate kinase.